Reading from the N-terminus, the 202-residue chain is AFG2-interacting ribosome maturation factor (202 aa).

Part of the 55LCC heterohexameric ATPase complex. Does not associate with pre-60S ribosomal particles.

It is found in the nucleus. The protein localises to the cytoplasm. Its function is as follows. Part of the 55LCC heterohexameric ATPase complex which is chromatin-associated and promotes replisome proteostasis to maintain replication fork progression and genome stability. Required for replication fork progression, sister chromatid cohesion, and chromosome stability. The ATPase activity is specifically enhanced by replication fork DNA and is coupled to cysteine protease-dependent cleavage of replisome substrates in response to replication fork damage. Uses ATPase activity to process replisome substrates in S-phase, facilitating their proteolytic turnover from chromatin to ensure DNA replication and mitotic fidelity. Involved in the cytoplasmic maturation steps of pre-60S ribosomal particles by promoting the release of shuttling protein RSL24D1/RLP24 from the pre-ribosomal particles. Plays an essential role in early embryonic development. The sequence is that of AFG2-interacting ribosome maturation factor (airim) from Danio rerio (Zebrafish).